Reading from the N-terminus, the 168-residue chain is S-ribosylhomocysteine lyase (168 aa).

Positions 54, 58, and 128 each coordinate Fe cation.

The protein belongs to the LuxS family. Homodimer. Fe cation serves as cofactor.

It carries out the reaction S-(5-deoxy-D-ribos-5-yl)-L-homocysteine = (S)-4,5-dihydroxypentane-2,3-dione + L-homocysteine. Involved in the synthesis of autoinducer 2 (AI-2) which is secreted by bacteria and is used to communicate both the cell density and the metabolic potential of the environment. The regulation of gene expression in response to changes in cell density is called quorum sensing. Catalyzes the transformation of S-ribosylhomocysteine (RHC) to homocysteine (HC) and 4,5-dihydroxy-2,3-pentadione (DPD). The chain is S-ribosylhomocysteine lyase from Neisseria meningitidis serogroup A / serotype 4A (strain DSM 15465 / Z2491).